Reading from the N-terminus, the 432-residue chain is Adenylosuccinate synthetase (432 aa).

GTP contacts are provided by residues 12–18 and 40–42; these read GDEGKGK and GHT. Catalysis depends on Asp13, which acts as the Proton acceptor. Mg(2+)-binding residues include Asp13 and Gly40. IMP contacts are provided by residues 13–16, 38–41, Thr130, Arg144, Gln225, Thr240, and Arg304; these read DEGK and NAGH. The active-site Proton donor is His41. 300-306 serves as a coordination point for substrate; that stretch reads ATTGRPR. GTP is bound by residues Arg306, 332 to 334, and 414 to 416; these read KLD and SVG.

Belongs to the adenylosuccinate synthetase family. Homodimer. The cofactor is Mg(2+).

It localises to the cytoplasm. The enzyme catalyses IMP + L-aspartate + GTP = N(6)-(1,2-dicarboxyethyl)-AMP + GDP + phosphate + 2 H(+). It functions in the pathway purine metabolism; AMP biosynthesis via de novo pathway; AMP from IMP: step 1/2. Plays an important role in the de novo pathway of purine nucleotide biosynthesis. Catalyzes the first committed step in the biosynthesis of AMP from IMP. The sequence is that of Adenylosuccinate synthetase from Anaeromyxobacter dehalogenans (strain 2CP-C).